The sequence spans 218 residues: Large ribosomal subunit protein bL25 (218 aa).

The interval 197–218 (PAEESGEKPVAHIEEKESTEKE) is disordered. Residues 201–218 (SGEKPVAHIEEKESTEKE) show a composition bias toward basic and acidic residues.

The protein belongs to the bacterial ribosomal protein bL25 family. CTC subfamily. Part of the 50S ribosomal subunit; part of the 5S rRNA/L5/L18/L25 subcomplex. Contacts the 5S rRNA. Binds to the 5S rRNA independently of L5 and L18.

This is one of the proteins that binds to the 5S RNA in the ribosome where it forms part of the central protuberance. The polypeptide is Large ribosomal subunit protein bL25 (Dehalococcoides mccartyi (strain ATCC BAA-2100 / JCM 16839 / KCTC 5957 / BAV1)).